Reading from the N-terminus, the 435-residue chain is Putative F-box/kelch-repeat protein At1g13200 (435 aa).

The segment at 1–29 (MKDAEKREVIASSSLQRKRNRGRRLRKRR) is disordered. The segment covering 16-29 (QRKRNRGRRLRKRR) has biased composition (basic residues). Residues 37–82 (LMVPSSLPNDVLEEIFLRFPVKALIRLKSLSKQWRSTIESRSFEER) form the F-box domain. 4 Kelch repeats span residues 164–217 (SVYV…DYKL), 224–270 (DKYI…PASA), 273–317 (SVYW…HIDM), and 322–368 (NSLC…EKRD).

In Arabidopsis thaliana (Mouse-ear cress), this protein is Putative F-box/kelch-repeat protein At1g13200.